The primary structure comprises 648 residues: Fidgetin-like protein 2 (648 aa).

Positions 1-36 (MHWTPEHAQPLNQWPEQHLDVSSTTPSPAHKLELPP) are disordered. Polar residues predominate over residues 10–27 (PLNQWPEQHLDVSSTTPS). Residues Ala-394 and 434-439 (GCGKAL) each bind ATP.

The protein belongs to the AAA ATPase family. It depends on Mg(2+) as a cofactor.

The protein localises to the cytoplasm. It localises to the cell cortex. The catalysed reaction is ATP + H2O = ADP + phosphate + H(+). Microtubule-severing enzyme that negatively regulates cell migration and wound healing. In migrating cells, targets dynamic microtubules (MTs) at the leading edge and severs them, thereby suppressing motility. Microtubule severing releases ARHGEF2 which activates RHOA, which in turn regulates focal ahesion turnover via focal adhesion kinase, as opposed to F-actin polymerization, to suppress cell motility. Negative regulator of axon regeneration that suppresses axonal growth by selectively severing dynamic MTs in the distal axon shaft and growth cone. Contributes to proper cell branching during endothelial and neuronal development. The polypeptide is Fidgetin-like protein 2 (Fignl2) (Rattus norvegicus (Rat)).